Reading from the N-terminus, the 247-residue chain is Killer cell lectin-like receptor subfamily I member 2 (247 aa).

Over residues 1–12 the composition is skewed to basic and acidic residues; it reads MPRKKQNERGTN. The tract at residues 1 to 39 is disordered; the sequence is MPRKKQNERGTNKQEIINIETKSSTFQEKQRQSKTDQIS. The Cytoplasmic portion of the chain corresponds to 1-79; it reads MPRKKQNERG…GTDPWLTTWR (79 aa). A helical transmembrane segment spans residues 80–100; that stretch reads IITVILGTSCIILVTKVGFLI. The Extracellular portion of the chain corresponds to 101–247; that stretch reads PNLFSRGEKR…KAYTCEFNLQ (147 aa). N-linked (GlcNAc...) asparagine glycosylation is found at N125, N196, N212, and N218. The 105-residue stretch at 139 to 243 folds into the C-type lectin domain; that stretch reads FGNNFYLFFR…CSSKKAYTCE (105 aa). Disulfide bonds link C160-C242 and C221-C234.

In terms of assembly, heterodimer with KLRE1. As to expression, expressed in natural killer (NK) cells.

Its subcellular location is the cell membrane. Functionally, lectin-like receptor for natural killer (NK) cells. Heterodimer formation with KLRE1 mediates NK cell cytolytic activity. This chain is Killer cell lectin-like receptor subfamily I member 2, found in Rattus norvegicus (Rat).